We begin with the raw amino-acid sequence, 62 residues long: Toxin Tb2-II (62 aa).

The LCN-type CS-alpha/beta domain occupies 1 to 62; sequence KEGYAMDHEG…KVWDYATNKC (62 aa). 4 disulfides stabilise this stretch: Cys11-Cys62, Cys15-Cys38, Cys23-Cys43, and Cys27-Cys45.

Belongs to the long (4 C-C) scorpion toxin superfamily. Sodium channel inhibitor family. Beta subfamily. As to expression, expressed by the venom gland.

The protein resides in the secreted. In terms of biological role, beta toxins bind voltage-independently at site-4 of sodium channels (Nav) and shift the voltage of activation toward more negative potentials thereby affecting sodium channel activation and promoting spontaneous and repetitive firing. This toxin is active against both mammals and insects. The chain is Toxin Tb2-II from Tityus bahiensis (Brazilian scorpion).